A 205-amino-acid polypeptide reads, in one-letter code: 3-isopropylmalate dehydratase small subunit (205 aa).

The protein belongs to the LeuD family. LeuD type 1 subfamily. As to quaternary structure, heterodimer of LeuC and LeuD.

It catalyses the reaction (2R,3S)-3-isopropylmalate = (2S)-2-isopropylmalate. The protein operates within amino-acid biosynthesis; L-leucine biosynthesis; L-leucine from 3-methyl-2-oxobutanoate: step 2/4. Its function is as follows. Catalyzes the isomerization between 2-isopropylmalate and 3-isopropylmalate, via the formation of 2-isopropylmaleate. This Buchnera aphidicola subsp. Thelaxes suberi protein is 3-isopropylmalate dehydratase small subunit (leuD).